The sequence spans 90 residues: Bombyxin B-7 (90 aa).

Residues 1–20 (MMKTSVMLMLVVVISLMCSG) form the signal peptide. Intrachain disulfides connect cysteine 30-cysteine 76, cysteine 42-cysteine 89, and cysteine 75-cysteine 80. Residues 49–67 (GGAQYAPYFWTRQYLGSRG) constitute a propeptide, c peptide like.

The protein belongs to the insulin family. As to quaternary structure, heterodimer of a B chain and an A chain linked by two disulfide bonds.

The protein localises to the secreted. Its function is as follows. Brain peptide responsible for activation of prothoracic glands to produce ecdysone in insects. This Bombyx mori (Silk moth) protein is Bombyxin B-7 (BBXB7).